The following is a 659-amino-acid chain: UvrABC system protein B (659 aa).

A Helicase ATP-binding domain is found at 25–182; that stretch reads QSIENGNRGQ…KKLIEIQYER (158 aa). 38 to 45 lines the ATP pocket; that stretch reads GVTGSGKT. Residues 91-114 carry the Beta-hairpin motif; that stretch reads YYDYYQPEAYVPQTDTFIEKDASI. The Helicase C-terminal domain occupies 429-582; it reads QIDDLYGEIQ…QMEYNEEHNI (154 aa). The 36-residue stretch at 622-657 folds into the UVR domain; sequence EKLIEQYEEEMKEAAKNLQFERAAELRDIIKDLKEN.

Belongs to the UvrB family. In terms of assembly, forms a heterotetramer with UvrA during the search for lesions. Interacts with UvrC in an incision complex.

It is found in the cytoplasm. Functionally, the UvrABC repair system catalyzes the recognition and processing of DNA lesions. A damage recognition complex composed of 2 UvrA and 2 UvrB subunits scans DNA for abnormalities. Upon binding of the UvrA(2)B(2) complex to a putative damaged site, the DNA wraps around one UvrB monomer. DNA wrap is dependent on ATP binding by UvrB and probably causes local melting of the DNA helix, facilitating insertion of UvrB beta-hairpin between the DNA strands. Then UvrB probes one DNA strand for the presence of a lesion. If a lesion is found the UvrA subunits dissociate and the UvrB-DNA preincision complex is formed. This complex is subsequently bound by UvrC and the second UvrB is released. If no lesion is found, the DNA wraps around the other UvrB subunit that will check the other stand for damage. This Clostridium perfringens (strain SM101 / Type A) protein is UvrABC system protein B.